We begin with the raw amino-acid sequence, 1479 residues long: WASH complex subunit 2 (1479 aa).

Over residues 1 to 17 (MPEEQPQQQQQPVREQP) the composition is skewed to low complexity. 5 disordered regions span residues 1–25 (MPEE…DVPW), 188–210 (GGLV…TEKK), 240–564 (FIED…GGVK), 576–1383 (FSGK…FDDI), and 1419–1479 (TSTT…NLFD). The segment covering 242-279 (EDSDSDSSDEEDEEDVDAEDGSDESSSESSSDDDDEKD) has biased composition (acidic residues). Residues 334 to 349 (SKKSSNSYTSSLSDIL) show a composition bias toward low complexity. The span at 422-431 (DDDLFGDSEE) shows a compositional bias: acidic residues. 2 stretches are compositionally biased toward low complexity: residues 465–475 (TTTSSQPQQKK) and 514–532 (TPKP…TTTK). A Phosphothreonine modification is found at Thr535. Polar residues predominate over residues 542 to 552 (ASGSESTTGKS). Basic and acidic residues predominate over residues 595 to 620 (TESKASEDDFFSSDKKSTSATKKDAE). Over residues 709–723 (PKAPTTATTTTTTKP) the composition is skewed to low complexity. Residues 765–781 (TETKKQPITEEPKKKQD) are compositionally biased toward basic and acidic residues. Over residues 802–814 (ASISPASPVSTIE) the composition is skewed to polar residues. The span at 839-885 (DLTKDEPAKSEPTKVEPTKVEPTKAEPTKVEPAKVEPTKVESDKKES) shows a compositional bias: basic and acidic residues. A compositionally biased stretch (polar residues) spans 904 to 916 (KNPTTSSSTTATE). Low complexity predominate over residues 951–968 (SSTTKKSTTTTTTTTSSK). Over residues 981–990 (KKVEEKKSSD) the composition is skewed to basic and acidic residues. 2 stretches are compositionally biased toward low complexity: residues 991–1000 (FDSFFSGSDD) and 1010–1021 (KTTTTPPLTSTT). The segment covering 1062–1075 (PLTSNNTKNRTKSI) has biased composition (polar residues). Residues 1091 to 1107 (EKNRSESPTSEKAEPTK) show a composition bias toward basic and acidic residues. The span at 1108-1123 (KTSNISSLQNKLSLNP) shows a compositional bias: polar residues. Residues 1147-1162 (STNNDNDSSATDLSDS) show a composition bias toward low complexity. Polar residues-rich tracts occupy residues 1163–1174 (GRSSPSVTSPTL) and 1220–1236 (KSGT…TPTQ). Ser1249 is modified (phosphoserine). The segment covering 1277–1292 (EKTSSGKSSPSPTIKS) has biased composition (low complexity). Positions 1307 to 1317 (ASTTTKPTASE) are enriched in polar residues. The segment covering 1327-1358 (KKSEPETPKETPKETPKEKEQTKEKEQPKETP) has biased composition (basic and acidic residues). Low complexity-rich tracts occupy residues 1419 to 1445 (TSTT…AVDN) and 1452 to 1466 (NTTT…TPSK).

Belongs to the FAM21 family. Probable component of the WASH complex.

In Dictyostelium discoideum (Social amoeba), this protein is WASH complex subunit 2.